The following is a 1182-amino-acid chain: MRAVLTWRDKAEQCIYDLAFKPDGTQLILAAGNRLLVYDTSDGTLLQPLKGHKDTVYCVAYAKDGKRFASGSADKSIIIWTSKLEGILKYTHNDSIQCVSYNPVTHQLASCSSSDFGLWSPEQKSVSKHKSSSKITCCSWTNDGQYLALGMANGIISIRNKNGEEKVKIERPGGSLSPIWSICWNPSREEHNDILAVADWGQKLSFYQLSGKQIGKDRPLNFDPCCISYFTKGEYILVGGSDKQVSLFTKDGVRLGTVGEQNSWVWTCRVKPDSNYVVVGCQDGTISFYQLIFSTVHGLYKDRYAYRDSMTDVIVQHLITEQKVRIKCRELVKKIAIYKNRLAIQLPEKILIYELYSEDSTDMHYRVKEKIVKKFECNLLVVCADHIILCQEKRLQCLSFSGVKEREWQMESLIRYIKVIGGPAGREGLLVGLKNGQILKIFVDNLFAIVLLKQATAVRCLDMSASRNKLAVVDENDTCLVYDIHTKELLFQEPNANSVAWNTQCEDMLCFSGGGYLNIKASTFPVHQQKLQGFVVGYNGSKIFCLHVFSMSAVEVPQSAPMYQYLDRKMFKEAYQIACLGVTDADWRELAMEALEGLEFETARKAFTRVQDLRYLELISSIEERKKRGETNNDLFLADVFSYQGKFHEAAKLYKRSGHENLALDMYTDLCMFEYAKDFLGSGDPKETKMLITKQADWARNINEPKAAVEMYISAGEHAKAIEISGSHGWVDMLIDIARKLDKAEREPLLMCACYFKKLDSPGYAAETYLKIGDLKSLVQLYVDTKRWDEAFALGEKHPEFKDDVYVPYAQWLAENDRFEEAQKAFHKAGRQGEAVRVLEQLTHNAVVESRFNDAAYYYWMLSMQCLDMAQDPAQKDAMLDKFHHFQHLAELYHGYQTIHRYTEEPFSFDLPETLFNISKFLLHSLTKATPLGISKVNTLFTLAKQSKALGAYKLARHAYDKLRGLQIPARIQKSIELGTLTIRSKPFHDSEELVPLCYRCSTNNPLLNNLGNVCINCRQPFIFSASSYEVLHLVEFYLEEGITDEEAVALIDLEAPRHKREGKWRETSSNNSQTLKLDETMDSIGEDDPFTAKLSFEQGSSEFVPVVVNRSVLRSMSRRDVLIKRWPPPLQWQYFRSLLPDASITMCPSCFQMFHSEDYELLVLQHACCPYCRRRIDDTGP.

8 WD repeats span residues 10–50 (KAEQ…QPLK), 51–91 (GHKD…LKYT), 93–129 (NDSI…VSKH), 131–169 (SSSK…KVKI), 174–217 (GSLS…IGKD), 219–258 (PLNF…LGTV), 260–300 (EQNS…HGLY), and 453–492 (KQAT…LLFQ).

As to quaternary structure, component of the IFT complex A (IFT-A) complex. IFT-A complex is divided into a core subcomplex composed of IFT122:IFT140:WDR19 which is associated with TULP3 and a peripheral subcomplex composed of IFT43:WDR35:TTC21B. Interacts with IFT43:WDR35; the interaction connects the 2 IFT-A subcomplexes. Interacts with IFTAP; the interaction associates IFTAP with IFT-A complex.

It is found in the cell projection. Its subcellular location is the cilium. The protein resides in the cytoplasm. The protein localises to the cytoskeleton. It localises to the cilium basal body. As a component of the IFT complex A (IFT-A), a complex required for retrograde ciliary transport and entry into cilia of G protein-coupled receptors (GPCRs), it is required in ciliogenesis and ciliary protein trafficking. Involved in cilia formation during neuronal patterning. Acts as a negative regulator of Shh signaling. Required to recruit TULP3 to primary cilia. The polypeptide is Intraflagellar transport protein 122 homolog (Mus musculus (Mouse)).